Consider the following 312-residue polypeptide: MRLLLALLVLAAAPPQARAASHWCYQIQVKPSNYTCLEPDEWEGSCQNNRQSPVNIVTAKTQLDPNLGRFSFSGYNMKHQWVVQNNGHTVMVLLENKPSIAGGGLSTRYQATQLHLHWSRAMDRGSEHSFDGERFAMEMHIVHEKEKGLSGNASQNQFAEDEIAVLAFMVEDGSKNVNFQPLVEALSDIPRPNMNTTMKEGVSLFDLLPEEESLRHYFRYLGSLTTPTCDEKVVWTVFQKPIQLHRDQILAFSQKLFYDDQQKVNMTDNVRPVQSLGQRQVFRSGAPGLLLAQPLPTLLAPVLACLTVGFLR.

The signal sequence occupies residues 1–18 (MRLLLALLVLAAAPPQAR). One can recognise an Alpha-carbonic anhydrase domain in the interval 21-285 (SHWCYQIQVK…LGQRQVFRSG (265 aa)). Cystine bridges form between C24/C36 and C46/C229. Residue N33 is glycosylated (N-linked (GlcNAc...) asparagine). The active-site Proton donor/acceptor is the H88. Zn(2+) contacts are provided by H115, H117, and H140. Residues N152 and N195 are each glycosylated (N-linked (GlcNAc...) asparagine). Residue 225–226 (TT) coordinates substrate. N265 is a glycosylation site (N-linked (GlcNAc...) asparagine). S284 is lipidated: GPI-anchor amidated serine. Residues 285 to 312 (GAPGLLLAQPLPTLLAPVLACLTVGFLR) constitute a propeptide, removed in mature form.

This sequence belongs to the alpha-carbonic anhydrase family. In terms of assembly, interacts with SLC4A4. The cofactor is Zn(2+).

It is found in the cell membrane. It catalyses the reaction hydrogencarbonate + H(+) = CO2 + H2O. With respect to regulation, inhibited by acetazolamide. Its function is as follows. Catalyzes the reversible hydration of carbon dioxide into bicarbonate and protons and thus is essential to maintaining intracellular and extracellular pH. May stimulate the sodium/bicarbonate transporter activity of SLC4A4 that acts in pH homeostasis. It is essential for acid overload removal from the retina and retina epithelium, and acid release in the choriocapillaris in the choroid. The sequence is that of Carbonic anhydrase 4 (CA4) from Bos taurus (Bovine).